Reading from the N-terminus, the 227-residue chain is Transcription antitermination protein NusB (227 aa).

2 disordered regions span residues 165–189 (ASESLDDAPVAPWDDSDALDDSDED) and 201–227 (AEETVEVSEVAEDSEVSKVSEEKADES). Composition is skewed to acidic residues over residues 178-189 (DDSDALDDSDED) and 201-214 (AEETVEVSEVAEDS). Over residues 215–227 (EVSKVSEEKADES) the composition is skewed to basic and acidic residues.

The protein belongs to the NusB family.

Functionally, involved in transcription antitermination. Required for transcription of ribosomal RNA (rRNA) genes. Binds specifically to the boxA antiterminator sequence of the ribosomal RNA (rrn) operons. The polypeptide is Transcription antitermination protein NusB (Corynebacterium glutamicum (strain ATCC 13032 / DSM 20300 / JCM 1318 / BCRC 11384 / CCUG 27702 / LMG 3730 / NBRC 12168 / NCIMB 10025 / NRRL B-2784 / 534)).